The following is a 525-amino-acid chain: MRFFLSFFIIFISSVLFSFGIPNEILNFGSAIAGFSGLVLVYYALLNCGSHKRAAFLYGFFVSFVHLMSSFWLAFFEDFAIFTLGASTLAYFFIAMPFGFLLYHSLQKRENLRPFFFAAIWLLWEFAKSTGFLAYPWGTAPMICFNLKPFIQFVDITGVWGLSFIVPLIAACLGEALQTYAYSANSKAFFKGLTEIKSPLIFTAFLVLIINIYGITILSIEMKPATFLNTVIVQQNTDPWDNSQFEENIKTSQALSRKAIFSANKKPDLIVWSESSLIVPYKDNEDFYGILPYDDPFTRFLADTDTPIIVGSPYIDGKKQYNAAYLLSPEGKILDIYSKIQLVPFAEYIPFIDNPLVVRFFDKLVGFSSGWNPGTEYKVFGIKNSEGKTVNFTVPICFEDAFPAVCLNLHNAGSEVLINITNDSWSKTKSAEYQHFVVAHFRAIELRTTLVRSTNSGYSVVVDPKGKIISDMPLFEAESVYTEVPVYGHKKTFYASYKDWLPIMMFLILIFNIFLEKRRAKTARF.

6 helical membrane passes run 25–45 (ILNF…YYAL), 56–76 (FLYG…LAFF), 81–101 (IFTL…FGFL), 115–135 (FFFA…FLAY), 153–173 (FVDI…AACL), and 200–220 (LIFT…ILSI). Residues 228–486 (LNTVIVQQNT…AESVYTEVPV (259 aa)) form the CN hydrolase domain. The active-site Proton acceptor is Glu-274. Lys-339 is an active-site residue. Cys-397 (nucleophile) is an active-site residue. A helical transmembrane segment spans residues 495 to 515 (ASYKDWLPIMMFLILIFNIFL).

This sequence belongs to the CN hydrolase family. Apolipoprotein N-acyltransferase subfamily.

The protein resides in the cell inner membrane. The enzyme catalyses N-terminal S-1,2-diacyl-sn-glyceryl-L-cysteinyl-[lipoprotein] + a glycerophospholipid = N-acyl-S-1,2-diacyl-sn-glyceryl-L-cysteinyl-[lipoprotein] + a 2-acyl-sn-glycero-3-phospholipid + H(+). It functions in the pathway protein modification; lipoprotein biosynthesis (N-acyl transfer). Its function is as follows. Catalyzes the phospholipid dependent N-acylation of the N-terminal cysteine of apolipoprotein, the last step in lipoprotein maturation. The polypeptide is Apolipoprotein N-acyltransferase 2 (Treponema denticola (strain ATCC 35405 / DSM 14222 / CIP 103919 / JCM 8153 / KCTC 15104)).